Here is a 273-residue protein sequence, read N- to C-terminus: F-actin-capping protein subunit alpha (273 aa).

Belongs to the F-actin-capping protein alpha subunit family. In terms of assembly, heterodimer of an alpha and a beta subunit.

It is found in the cytoplasm. The protein resides in the cytoskeleton. F-actin-capping proteins bind in a Ca(2+)-independent manner to the fast growing ends of actin filaments (barbed end) thereby blocking the exchange of subunits at these ends. Unlike other capping proteins (such as gelsolin and severin), these proteins do not sever actin filaments. The chain is F-actin-capping protein subunit alpha (cap1) from Emericella nidulans (strain FGSC A4 / ATCC 38163 / CBS 112.46 / NRRL 194 / M139) (Aspergillus nidulans).